The following is a 208-amino-acid chain: UPF0637 protein BCQ_3749 (208 aa).

This sequence belongs to the UPF0637 family.

The sequence is that of UPF0637 protein BCQ_3749 from Bacillus cereus (strain Q1).